The primary structure comprises 145 residues: Synaptojanin-2-binding protein (145 aa).

Residues 1–117 (MNGRVDYLVT…GPQGEGEPSG (117 aa)) lie on the Cytoplasmic side of the membrane. The region spanning 13-100 (EINLTRGPSG…AVSLRVQHRL (88 aa)) is the PDZ domain. The chain crosses the membrane as a helical; Anchor for type IV membrane protein span at residues 118 to 138 (IPIAMVLVPVFALTMVAAWAF). The Mitochondrial intermembrane segment spans residues 139 to 145 (MRYRQRL).

Binds (via the PDZ domain) to isoform 2A of SYNJ2 (via the unique motif in the C-terminus). Interacts (via C-terminus) with RALBP1. Interacts (via PDZ domain) with ACVR2A (via C-terminus) and ACVR2B (via C-terminus). Forms a ternary complex with ACVR2A and RALBP1. Interacts with MAPK12. Interacts with DLL1; enhances DLL1 protein stability, and promotes notch signaling in endothelial cells.

The protein resides in the mitochondrion outer membrane. The protein localises to the cytoplasm. Its subcellular location is the perinuclear region. Regulates endocytosis of activin type 2 receptor kinases through the Ral/RALBP1-dependent pathway and may be involved in suppression of activin-induced signal transduction. The chain is Synaptojanin-2-binding protein from Bos taurus (Bovine).